We begin with the raw amino-acid sequence, 379 residues long: DNA (cytosine-5)-methyltransferase (379 aa).

Positions 4–366 (LRVLEFYSGI…KVLVSPNEEE (363 aa)) constitute an SAM-dependent MTase C5-type domain. Cys-78 is a catalytic residue. Over residues 178–192 (KKEQDKHNEKVDENK) the composition is skewed to basic and acidic residues. The interval 178 to 205 (KKEQDKHNEKVDENKLNNNSNNNNEQNK) is disordered. Over residues 193 to 203 (LNNNSNNNNEQ) the composition is skewed to low complexity.

Belongs to the class I-like SAM-binding methyltransferase superfamily. C5-methyltransferase family.

It is found in the nucleus. It catalyses the reaction a 2'-deoxycytidine in DNA + S-adenosyl-L-methionine = a 5-methyl-2'-deoxycytidine in DNA + S-adenosyl-L-homocysteine + H(+). Involved in epigenetic gene silencing. Methylates specific cytosine residues in the retrotransposons DIRS-1 and Skipper. The protein is DNA (cytosine-5)-methyltransferase (dnmA) of Dictyostelium discoideum (Social amoeba).